The sequence spans 362 residues: Chemerin-like receptor 1 (362 aa).

Topologically, residues 1–37 (MEAEDYNASYEDYPDDVDPIVVLEELSPLEGRVVRIL) are extracellular. Residue Asn-7 is glycosylated (N-linked (GlcNAc...) asparagine). Residues 38–58 (LVAVYSVICLLGILGNGLVIV) form a helical membrane-spanning segment. At 59–70 (MITCKMKRTVNT) the chain is on the cytoplasmic side. The chain crosses the membrane as a helical span at residues 71–91 (VWFLNLAVADFLFNVFLPVHI). Over 92-108 (AYAALDYHWVFGTAMCK) the chain is Extracellular. Cysteines 107 and 184 form a disulfide. The chain crosses the membrane as a helical span at residues 109 to 129 (ISNFLLIHNMFTSVFLLTVIS). The Cytoplasmic segment spans residues 130–151 (FDRCVSVLLPVWSQNHRSVRLA). A helical membrane pass occupies residues 152-172 (YTACLVIWVLAFFLSSPSLVF). The Extracellular segment spans residues 173-219 (RDTARLHGKISCFNNFSLSAAVSSPWPAHPQVDPVGSGRHKVVTITR). Asn-187 carries N-linked (GlcNAc...) asparagine glycosylation. The chain crosses the membrane as a helical span at residues 220–240 (FLCGFLVPGLITTACYLTIVY). Topologically, residues 241–255 (KLQRSRLAKTKKPFK) are cytoplasmic. A helical membrane pass occupies residues 256 to 276 (IILTIIVTFFLCWCPYHAFYL). At 277–281 (LELRR) the chain is on the extracellular side. A helical transmembrane segment spans residues 282-302 (GSVPPSVFSLGVPLATAIAIA). The Cytoplasmic segment spans residues 303–362 (NSCMNPILYVFMGQDFKKFRVALFSRLVNALSEDTGHSSYPSHRSFTKMSSMNERETGML). Ser-334 carries the phosphoserine modification. The segment at 336–362 (DTGHSSYPSHRSFTKMSSMNERETGML) is disordered. Thr-337 carries the phosphothreonine modification. Residues 339–354 (HSSYPSHRSFTKMSSM) are compositionally biased toward polar residues. Ser-344, Ser-347, and Ser-353 each carry phosphoserine.

It belongs to the chemokine-like receptor (CMKLR) family. Widely expressed in several tissues including adipose, muscle, liver and brain.

The protein localises to the cell membrane. Functionally, receptor for the chemoattractant adipokine chemerin/RARRES2 and for the omega-3 fatty acid derived molecule resolvin E1. Interaction with RARRES2 initiates activation of G proteins G(i)/G(o) and beta-arrestin pathways inducing cellular responses via second messenger pathways such as intracellular calcium mobilization, phosphorylation of MAP kinases MAPK1/MAPK3 (ERK1/2), TYRO3, MAPK14/P38MAPK and PI3K leading to multifunctional effects, like, reduction of immune responses, enhancing of adipogenesis and angionesis. Resolvin E1 down-regulates cytokine production in macrophages by reducing the activation of MAPK1/3 (ERK1/2) and NF-kappa-B. Positively regulates adipogenesis and adipocyte metabolism. This chain is Chemerin-like receptor 1 (CMLKR1), found in Bos taurus (Bovine).